Here is a 209-residue protein sequence, read N- to C-terminus: uncharacterized protein (209 aa).

Helical transmembrane passes span 10-32, 37-59, and 64-86; these read AVVIILTRFMEAIAIIISIYLAF, LRYVLATAGVFLLSVLINLTGLI, and FIYFSLASIFLSALILTALILYV.

It localises to the cell membrane. This is an uncharacterized protein from Aquifex aeolicus (strain VF5).